We begin with the raw amino-acid sequence, 292 residues long: Very long chain fatty acid elongase 2 (292 aa).

Helical transmembrane passes span 29 to 49, 67 to 87, 115 to 135, 153 to 173, 175 to 195, 205 to 225, and 230 to 250; these read WFLL…LLSI, ILTL…VELI, VLWW…FFVL, MFNI…FFGP, LNSF…FPSM, LTQA…SAVV, and FPFG…ILFL. The short motif at 289–292 is the Di-lysine motif element; that stretch reads KKAQ.

The protein belongs to the ELO family. ELOVL2 subfamily. As to quaternary structure, interacts with TECR. In terms of tissue distribution, highly expressed in testis, lower level in liver. Weakly expressed in white adipose tissue, brain and kidney.

Its subcellular location is the endoplasmic reticulum membrane. The enzyme catalyses a very-long-chain acyl-CoA + malonyl-CoA + H(+) = a very-long-chain 3-oxoacyl-CoA + CO2 + CoA. It carries out the reaction (5Z,8Z,11Z,14Z)-eicosatetraenoyl-CoA + malonyl-CoA + H(+) = (7Z,10Z,13Z,16Z)-3-oxodocosatetraenoyl-CoA + CO2 + CoA. The catalysed reaction is (7Z,10Z,13Z,16Z)-docosatetraenoyl-CoA + malonyl-CoA + H(+) = (9Z,12Z,15Z,18Z)-3-oxotetracosatetraenoyl-CoA + CO2 + CoA. It catalyses the reaction (5Z,8Z,11Z,14Z,17Z)-eicosapentaenoyl-CoA + malonyl-CoA + H(+) = 3-oxo-(7Z,10Z,13Z,16Z,19Z)-docosapentaenoyl-CoA + CO2 + CoA. The enzyme catalyses (7Z,10Z,13Z,16Z,19Z)-docosapentaenoyl-CoA + malonyl-CoA + H(+) = (9Z,12Z,15Z,18Z,21Z)-3-oxotetracosapentaenoyl-CoA + CO2 + CoA. It functions in the pathway lipid metabolism; polyunsaturated fatty acid biosynthesis. Its function is as follows. Catalyzes the first and rate-limiting reaction of the four reactions that constitute the long-chain fatty acids elongation cycle. This endoplasmic reticulum-bound enzymatic process allows the addition of 2 carbons to the chain of long- and very long-chain fatty acids (VLCFAs) per cycle. Condensing enzyme that catalyzes the synthesis of polyunsaturated very long chain fatty acid (C20- and C22-PUFA), acting specifically toward polyunsaturated acyl-CoA with the higher activity toward C20:4(n-6) acyl-CoA. May participate in the production of polyunsaturated VLCFAs of different chain lengths that are involved in multiple biological processes as precursors of membrane lipids and lipid mediators. Essential for the formation of C24:5(n-6) up to C30:5(n-6) PUFAs in testis, these fatty acids being indispensable for normal spermatogenesis and fertility. The protein is Very long chain fatty acid elongase 2 of Mus musculus (Mouse).